Consider the following 224-residue polypeptide: Cytidylate kinase (224 aa).

10-18 (GPASAGKST) serves as a coordination point for ATP.

The protein belongs to the cytidylate kinase family. Type 1 subfamily.

It is found in the cytoplasm. The enzyme catalyses CMP + ATP = CDP + ADP. It catalyses the reaction dCMP + ATP = dCDP + ADP. The chain is Cytidylate kinase from Leuconostoc mesenteroides subsp. mesenteroides (strain ATCC 8293 / DSM 20343 / BCRC 11652 / CCM 1803 / JCM 6124 / NCDO 523 / NBRC 100496 / NCIMB 8023 / NCTC 12954 / NRRL B-1118 / 37Y).